The following is a 122-amino-acid chain: uncharacterized protein (122 aa).

This is an uncharacterized protein from Rickettsia conorii (strain ATCC VR-613 / Malish 7).